Consider the following 72-residue polypeptide: Phaiodotoxin-2 (72 aa).

Residues 1-72 (KFIRHKDESF…CFGALESKCA (72 aa)) enclose the LCN-type CS-alpha/beta domain. Cystine bridges form between cysteine 13–cysteine 38, cysteine 23–cysteine 50, cysteine 27–cysteine 52, and cysteine 63–cysteine 71.

The protein belongs to the long (4 C-C) scorpion toxin superfamily. Sodium channel inhibitor family. In terms of tissue distribution, expressed by the venom gland.

It is found in the secreted. In terms of biological role, sodium channel (Nav) specific neurotoxin. This is Phaiodotoxin-2 from Anuroctonus phaiodactylus (Mafia scorpion).